We begin with the raw amino-acid sequence, 142 residues long: Large ribosomal subunit protein uL11 (142 aa).

The protein belongs to the universal ribosomal protein uL11 family. Part of the ribosomal stalk of the 50S ribosomal subunit. Interacts with L10 and the large rRNA to form the base of the stalk. L10 forms an elongated spine to which L12 dimers bind in a sequential fashion forming a multimeric L10(L12)X complex. One or more lysine residues are methylated.

Forms part of the ribosomal stalk which helps the ribosome interact with GTP-bound translation factors. The sequence is that of Large ribosomal subunit protein uL11 from Serratia marcescens.